A 348-amino-acid chain; its full sequence is Elongation factor Ts (348 aa).

The involved in Mg(2+) ion dislocation from EF-Tu stretch occupies residues 80–83; sequence TDFV.

Belongs to the EF-Ts family.

The protein resides in the cytoplasm. Its function is as follows. Associates with the EF-Tu.GDP complex and induces the exchange of GDP to GTP. It remains bound to the aminoacyl-tRNA.EF-Tu.GTP complex up to the GTP hydrolysis stage on the ribosome. The sequence is that of Elongation factor Ts from Streptococcus mutans serotype c (strain ATCC 700610 / UA159).